Reading from the N-terminus, the 926-residue chain is Storkhead-box protein 2 (926 aa).

Disordered stretches follow at residues 1–32 (MKKT…RSEK), 338–393 (EEEK…DIPG), 452–529 (EMPF…SYID), 564–586 (KEPS…PSYG), 633–693 (VKKL…SLDK), 723–802 (LLKS…VGTM), and 823–926 (TLLT…VTSV). A compositionally biased stretch (basic and acidic residues) spans 18 to 32 (FSDRASDRMRSRSEK). Residues 353–378 (HSGRSKKSRTHRKSHGKSRSHSKTRV) show a composition bias toward basic residues. The span at 379–393 (SKGDPSDGSHLDIPG) shows a compositional bias: basic and acidic residues. The span at 463 to 472 (SHSKVHRSHS) shows a compositional bias: basic residues. Over residues 473-495 (HTQDRRSRNERSNKAKERSRSMD) the composition is skewed to basic and acidic residues. Residues 518–529 (QDDQTPSQSYID) are compositionally biased toward polar residues. Basic and acidic residues-rich tracts occupy residues 633–658 (VKKL…EESP) and 684–693 (HSAEPSSLDK). Residues 746 to 769 (LGTSAAQAMPPSQRQQEPGGNQEA) are compositionally biased toward polar residues. The segment covering 785–799 (GANKNAEEEKNRDDV) has biased composition (basic and acidic residues). 2 stretches are compositionally biased toward polar residues: residues 847–884 (MDSS…QNPA) and 914–926 (KPSN…VTSV).

The chain is Storkhead-box protein 2 (Stox2) from Mus musculus (Mouse).